A 1715-amino-acid polypeptide reads, in one-letter code: Ubiquitin carboxyl-terminal hydrolase 32 (1715 aa).

2 consecutive EF-hand domains span residues Ile-161 to Gly-196 and Pro-197 to Val-232. Ca(2+) contacts are provided by Asp-174, Asn-176, Asp-178, His-180, Glu-185, Asp-210, Asp-212, Asp-214, and Glu-221. The region spanning Gln-314–Ile-492 is the DUSP domain. Positions Gln-393 to Pro-429 are disordered. The segment covering Gly-408 to Gly-419 has biased composition (low complexity). The USP domain maps to Thr-677–Lys-1675. The active-site Nucleophile is Cys-686. Composition is skewed to polar residues over residues Thr-1103–Thr-1126 and Tyr-1150–His-1164. Disordered stretches follow at residues Thr-1103–Ala-1213 and Asp-1536–Leu-1569. Over residues Asp-1171–Asn-1180 the composition is skewed to acidic residues. Residues Asp-1188 to Pro-1209 show a composition bias toward polar residues. Positions Ala-1540–Leu-1549 are enriched in basic and acidic residues. Polar residues predominate over residues Pro-1550–Thr-1559. His-1633 serves as the catalytic Proton acceptor.

It belongs to the peptidase C19 family. USP20/USP33 subfamily.

The enzyme catalyses Thiol-dependent hydrolysis of ester, thioester, amide, peptide and isopeptide bonds formed by the C-terminal Gly of ubiquitin (a 76-residue protein attached to proteins as an intracellular targeting signal).. Deubiquitinating enzyme that acts as an inhibitor of mitophagy probably by counteracting the action of park. Possibly functions by hydrolyzing ubiquitin attached by park on target proteins, thereby reducing park's ability to drive mitophagy. The sequence is that of Ubiquitin carboxyl-terminal hydrolase 32 from Drosophila melanogaster (Fruit fly).